The chain runs to 263 residues: Trans-aconitate 2-methyltransferase (263 aa).

It belongs to the methyltransferase superfamily. Tam family.

The protein localises to the cytoplasm. The enzyme catalyses trans-aconitate + S-adenosyl-L-methionine = (E)-3-(methoxycarbonyl)pent-2-enedioate + S-adenosyl-L-homocysteine. Its function is as follows. Catalyzes the S-adenosylmethionine monomethyl esterification of trans-aconitate. This is Trans-aconitate 2-methyltransferase from Mycobacterium ulcerans (strain Agy99).